Consider the following 569-residue polypeptide: Protein Noxp20 (569 aa).

3 disordered regions span residues M1–T87, G102–R126, and A165–G208. T197 carries the post-translational modification Phosphothreonine. A Phosphoserine modification is found at S262. The tract at residues V404–K439 is disordered.

It belongs to the FAM114 family. In terms of tissue distribution, over-expressed in brain. Also detected in lung, stomach, and in a lower extent in testis and thymus.

The protein resides in the cytoplasm. Functionally, may play a role in neuronal cell development. The sequence is that of Protein Noxp20 (Fam114a1) from Mus musculus (Mouse).